The sequence spans 513 residues: MRKIEFFDTSLRDGEQTPGVIFSIAEKVTIAKQLEKWGISVIEAGFPAASPDSFEAVKQISKALKETAVTALARCVITDIDKAVEAVREAQHPQIHVFIATSPIHMKYKFKISPDEVLKTIDKCVRHAHEQVEVVEFSPEDATRTEPEFLLKAVQTAVDAGATYINIPDTVGYTTPEEYGKIFKMLIDNIKADREIIFSPHCHDDLGMAVANSLAAIKAGAGRVEGTVNGIGERAGNAAIEEIAVALHIRKDYYQAKSPLVLAETMATAELISQFSGIAIPKNKAVVGANAFAHESGIHQDGVLKNAETYEIISPELVGIKHNSLPLGKLSGRHAFTEKLTELNISYDAKELPNLFERFKRLADKKKEITDADIHALFTGETVKNLAGFILNNVQIDGHKALVELKNQDAEIYVSQGEGSGSVDAIFQAIDKVFNYQLKLISYSVDAVTNGIDAQATTVVSVENLATGTIFNAKGVDYDVLKGSAIAYMNANVLVQKENSQGKVEQISAHDGI.

The Pyruvate carboxyltransferase domain occupies 4-266 (IEFFDTSLRD…KSPLVLAETM (263 aa)). Residues D13, H201, H203, and N237 each contribute to the Mn(2+) site. Positions 390–513 (ILNNVQIDGH…VEQISAHDGI (124 aa)) are regulatory domain.

This sequence belongs to the alpha-IPM synthase/homocitrate synthase family. LeuA type 1 subfamily. As to quaternary structure, homodimer. Mn(2+) is required as a cofactor.

The protein resides in the cytoplasm. It carries out the reaction 3-methyl-2-oxobutanoate + acetyl-CoA + H2O = (2S)-2-isopropylmalate + CoA + H(+). It functions in the pathway amino-acid biosynthesis; L-leucine biosynthesis; L-leucine from 3-methyl-2-oxobutanoate: step 1/4. Catalyzes the condensation of the acetyl group of acetyl-CoA with 3-methyl-2-oxobutanoate (2-ketoisovalerate) to form 3-carboxy-3-hydroxy-4-methylpentanoate (2-isopropylmalate). The chain is 2-isopropylmalate synthase from Lactococcus lactis subsp. cremoris (strain SK11).